We begin with the raw amino-acid sequence, 378 residues long: Succinyl-diaminopimelate desuccinylase (378 aa).

Zn(2+) is bound at residue His67. Asp69 is a catalytic residue. Asp100 contributes to the Zn(2+) binding site. Catalysis depends on Glu134, which acts as the Proton acceptor. 3 residues coordinate Zn(2+): Glu135, Glu163, and His349.

The protein belongs to the peptidase M20A family. DapE subfamily. As to quaternary structure, homodimer. Requires Zn(2+) as cofactor. Co(2+) is required as a cofactor.

The enzyme catalyses N-succinyl-(2S,6S)-2,6-diaminopimelate + H2O = (2S,6S)-2,6-diaminopimelate + succinate. It participates in amino-acid biosynthesis; L-lysine biosynthesis via DAP pathway; LL-2,6-diaminopimelate from (S)-tetrahydrodipicolinate (succinylase route): step 3/3. Functionally, catalyzes the hydrolysis of N-succinyl-L,L-diaminopimelic acid (SDAP), forming succinate and LL-2,6-diaminopimelate (DAP), an intermediate involved in the bacterial biosynthesis of lysine and meso-diaminopimelic acid, an essential component of bacterial cell walls. The polypeptide is Succinyl-diaminopimelate desuccinylase (Nitrosomonas eutropha (strain DSM 101675 / C91 / Nm57)).